The chain runs to 193 residues: Orotate phosphoribosyltransferase (193 aa).

A 5-phospho-alpha-D-ribose 1-diphosphate-binding site is contributed by 117-125 (EDVVTTGLS). Residues T121 and R149 each coordinate orotate.

The protein belongs to the purine/pyrimidine phosphoribosyltransferase family. PyrE subfamily. Homodimer. Mg(2+) serves as cofactor.

The catalysed reaction is orotidine 5'-phosphate + diphosphate = orotate + 5-phospho-alpha-D-ribose 1-diphosphate. Its pathway is pyrimidine metabolism; UMP biosynthesis via de novo pathway; UMP from orotate: step 1/2. Its function is as follows. Catalyzes the transfer of a ribosyl phosphate group from 5-phosphoribose 1-diphosphate to orotate, leading to the formation of orotidine monophosphate (OMP). In Erythrobacter litoralis (strain HTCC2594), this protein is Orotate phosphoribosyltransferase.